We begin with the raw amino-acid sequence, 236 residues long: VVGGDECNINEHPFLVALYTSTSSTIHCGGALINREWVLTAAHCDRRNIRIKLGMHSKNIRNEDEQIRVPRGKYFCLNTKFPNGLDKDIMLIRLRRPVTYSTHIAPVSLPSRSRGVGSRCRIMGWGKISTTEDTYPDVPHCTNIFIVKHKWCEPLYPWVPADSRTLCAGILKGGRDTCHGDSGGPLICNGQIQGIVAGGSEPCGQHLKPAVYTKVFDYNNWIQNIIAGNRTVTCPP.

Residues 1 to 227 (VVGGDECNIN…YNNWIQNIIA (227 aa)) enclose the Peptidase S1 domain. 6 cysteine pairs are disulfide-bonded: cysteine 7–cysteine 141, cysteine 28–cysteine 44, cysteine 76–cysteine 234, cysteine 120–cysteine 188, cysteine 152–cysteine 167, and cysteine 178–cysteine 203. Catalysis depends on charge relay system residues histidine 43 and aspartate 88. The Charge relay system role is filled by serine 182. A glycan (N-linked (GlcNAc...) asparagine) is linked at asparagine 229.

The protein belongs to the peptidase S1 family. Snake venom subfamily. Monomer. As to expression, expressed by the venom gland.

It localises to the secreted. The catalysed reaction is Fully activates human clotting factor V by a single cleavage at the 1545-Trp-Tyr-Leu-Arg-|-Ser-Asn-Asn-Gly-1552 bond. Cattle, but not rabbit, factor V is cleaved, and no other proteins of the clotting system are attacked. Esterase activity is observed on Bz-Arg-OEt and Tos-Arg-OMe, and amidase activity on Phe-pipecolyl-Arg-NHPhNO2.. Its activity is regulated as follows. Inhibited by D-Phe-Pro-Arg-chloromethyl ketone (FPRCK) (97%), PMSF (76%), and benzamidine (50%). Is not inhibited by BPTI, antithrombin and EDTA. Its function is as follows. Venom serine protease that activates factor V (F5) in a calcium-independent manner. It cleaves the Arg(1545)-Ser(1546) linkage in the human factor V molecule. Induces the coagulation of mammalian plasma. This chain is Factor V activator RVV-V alpha, found in Daboia siamensis (Eastern Russel's viper).